Here is a 350-residue protein sequence, read N- to C-terminus: Integrin beta-1-binding protein 2 (350 aa).

The Zn(2+) site is built by C5, C10, C24, and H27. Positions 5–64 (CYNKGCGQHFDPNTNLPDSCRYHPGVPIFHDALKGWSCCRKRTVDFSEFLNIKGCTVGLH) constitute a CHORD 1 domain. The short motif at 28-31 (PGVP) is the SH3-binding element. Zn(2+) contacts are provided by C42, C43, C59, and H64. Positions 70–79 (PEVPPQPEGP) match the SH3-binding motif. The interval 72–92 (VPPQPEGPATSSLQEQKPLNT) is disordered. Residues 80–92 (ATSSLQEQKPLNT) show a composition bias toward polar residues. Zn(2+)-binding residues include C150 and C155. A CHORD 2 domain is found at 150-209 (CQNPGCDAVYQGPESDATPCTYHPGAPRFHEGMKSWSCCGIQTLDFGAFLAQPGCRVGRH). An SH2-binding motif is present at residues 159 to 162 (YQGP). Zn(2+) is bound by residues C169 and H172. Residues 173–176 (PGAP) carry the SH3-binding motif. Zn(2+) contacts are provided by C187, C188, C204, and H209. In terms of domain architecture, CS spans 216–305 (PASCRHDWHQ…ADPGSWAQLE (90 aa)). Positions 235–238 (YGQI) match the SH2-binding motif. The tract at residues 317 to 350 (GVLLEMDEEESEDSDDDLSWTEEEDEEEEEAMGE) is disordered. The span at 321–350 (EMDEEESEDSDDDLSWTEEEDEEEEEAMGE) shows a compositional bias: acidic residues.

Interacts with beta-1 integrin subunit. This interaction is regulated by divalent cations, and it occurs only in absence of calcium. As to expression, expressed in skeletal and cardiac muscles but not in other tissues. Is localized in rows flanking the Z line containing alpha-actinin.

In terms of biological role, may play a role during maturation and/or organization of muscles cells. The polypeptide is Integrin beta-1-binding protein 2 (Itgb1bp2) (Mus musculus (Mouse)).